Reading from the N-terminus, the 271-residue chain is 1,4-dihydroxy-2-naphthoyl-CoA synthase (271 aa).

Residues 71–75 (SGGDQ), tyrosine 83, 115–119 (YAIGG), threonine 141, serine 147, tyrosine 244, and lysine 259 contribute to the substrate site. 140-142 (QTG) is a hydrogencarbonate binding site. Residues 250 to 263 (KEGRDSFKEKRKPD) show a composition bias toward basic and acidic residues. The disordered stretch occupies residues 250–271 (KEGRDSFKEKRKPDFGQFPRFP).

This sequence belongs to the enoyl-CoA hydratase/isomerase family. MenB subfamily. It depends on hydrogencarbonate as a cofactor.

The catalysed reaction is 2-succinylbenzoyl-CoA + H(+) = 1,4-dihydroxy-2-naphthoyl-CoA + H2O. It participates in quinol/quinone metabolism; 1,4-dihydroxy-2-naphthoate biosynthesis; 1,4-dihydroxy-2-naphthoate from chorismate: step 6/7. The protein operates within quinol/quinone metabolism; menaquinone biosynthesis. Converts o-succinylbenzoyl-CoA (OSB-CoA) to 1,4-dihydroxy-2-naphthoyl-CoA (DHNA-CoA). This is 1,4-dihydroxy-2-naphthoyl-CoA synthase from Bacillus subtilis (strain 168).